Here is a 1241-residue protein sequence, read N- to C-terminus: DNA-directed RNA polymerase subunit beta (1241 aa).

It belongs to the RNA polymerase beta chain family. The RNAP catalytic core consists of 2 alpha, 1 beta, 1 beta' and 1 omega subunit. When a sigma factor is associated with the core the holoenzyme is formed, which can initiate transcription.

The catalysed reaction is RNA(n) + a ribonucleoside 5'-triphosphate = RNA(n+1) + diphosphate. Functionally, DNA-dependent RNA polymerase catalyzes the transcription of DNA into RNA using the four ribonucleoside triphosphates as substrates. The chain is DNA-directed RNA polymerase subunit beta from Clostridium botulinum (strain Alaska E43 / Type E3).